Reading from the N-terminus, the 102-residue chain is MAKGQSLQDPFLNALRRERVPVSIYLVNGIKLQGQIESFDQFVILLKNTVSQMVYKHAISTVVPSRPVSHHSNNAGGGTSSNYHHGSSAQNTSAQQDSEETE.

The region spanning 9-68 (DPFLNALRRERVPVSIYLVNGIKLQGQIESFDQFVILLKNTVSQMVYKHAISTVVPSRPV) is the Sm domain. The tract at residues 63 to 102 (VPSRPVSHHSNNAGGGTSSNYHHGSSAQNTSAQQDSEETE) is disordered. Positions 70–96 (HHSNNAGGGTSSNYHHGSSAQNTSAQQ) are enriched in polar residues.

Belongs to the Hfq family. Homohexamer.

Its function is as follows. RNA chaperone that binds small regulatory RNA (sRNAs) and mRNAs to facilitate mRNA translational regulation in response to envelope stress, environmental stress and changes in metabolite concentrations. Also binds with high specificity to tRNAs. This chain is RNA-binding protein Hfq, found in Escherichia fergusonii (strain ATCC 35469 / DSM 13698 / CCUG 18766 / IAM 14443 / JCM 21226 / LMG 7866 / NBRC 102419 / NCTC 12128 / CDC 0568-73).